A 213-amino-acid chain; its full sequence is Urease accessory protein UreG (213 aa).

Residue 17–24 coordinates GTP; the sequence is GPVGSGKT.

This sequence belongs to the SIMIBI class G3E GTPase family. UreG subfamily. Homodimer. UreD, UreF and UreG form a complex that acts as a GTP-hydrolysis-dependent molecular chaperone, activating the urease apoprotein by helping to assemble the nickel containing metallocenter of UreC. The UreE protein probably delivers the nickel.

It localises to the cytoplasm. Its function is as follows. Facilitates the functional incorporation of the urease nickel metallocenter. This process requires GTP hydrolysis, probably effectuated by UreG. This Delftia acidovorans (strain DSM 14801 / SPH-1) protein is Urease accessory protein UreG.